Consider the following 382-residue polypeptide: Na(+)/H(+) antiporter NhaA (382 aa).

Helical transmembrane passes span Ala14–Phe34, Met49–Leu69, Ile87–Phe107, Gly117–Gly137, Val146–Phe166, Leu171–Ser191, Phe205–Leu225, Ala247–Ile267, Val285–Val305, Ile321–Leu341, and Leu356–Ser376.

Belongs to the NhaA Na(+)/H(+) (TC 2.A.33) antiporter family.

It is found in the cell inner membrane. The enzyme catalyses Na(+)(in) + 2 H(+)(out) = Na(+)(out) + 2 H(+)(in). Functionally, na(+)/H(+) antiporter that extrudes sodium in exchange for external protons. In Aliivibrio salmonicida (strain LFI1238) (Vibrio salmonicida (strain LFI1238)), this protein is Na(+)/H(+) antiporter NhaA.